Reading from the N-terminus, the 259-residue chain is Large ribosomal subunit protein uL3c (259 aa).

The N-terminal 37 residues, 1 to 37 (LKTTPLTLRSPFLHRLPLRALKTHKPTSLHISKSSIS), are a transit peptide targeting the chloroplast. The segment at 176-211 (MTHGSKSHRQLGSIGAGTTPGRVYKGKKMPGRMGGT) is disordered. The span at 199-211 (YKGKKMPGRMGGT) shows a compositional bias: basic residues.

It belongs to the universal ribosomal protein uL3 family. As to quaternary structure, part of the 50S ribosomal subunit.

The protein resides in the plastid. It is found in the chloroplast. Functionally, one of the primary rRNA binding proteins, it binds directly near the 3'-end of the 23S rRNA, where it nucleates assembly of the 50S subunit. This is Large ribosomal subunit protein uL3c (RPL3) from Nicotiana tabacum (Common tobacco).